The following is a 20-amino-acid chain: Elastase (20 aa).

The 20-residue stretch at 1-20 folds into the Peptidase S1 domain; the sequence is VVGGEVARAHSWPWQISLQY.

This sequence belongs to the peptidase S1 family. Elastase subfamily.

Digests most rapidly at the C-terminal side of alanine residues, but also cleaves at valine and leucine residues. The sequence is that of Elastase from Gadus morhua (Atlantic cod).